The primary structure comprises 478 residues: Ribosomal RNA small subunit methyltransferase F (478 aa).

S-adenosyl-L-methionine-binding positions include 121 to 127, Glu145, Asp172, and Asp190; that span reads ASAPGSK. Residue Cys243 is the Nucleophile of the active site.

The protein belongs to the class I-like SAM-binding methyltransferase superfamily. RsmB/NOP family.

It localises to the cytoplasm. It catalyses the reaction cytidine(1407) in 16S rRNA + S-adenosyl-L-methionine = 5-methylcytidine(1407) in 16S rRNA + S-adenosyl-L-homocysteine + H(+). Functionally, specifically methylates the cytosine at position 1407 (m5C1407) of 16S rRNA. The polypeptide is Ribosomal RNA small subunit methyltransferase F (Shewanella woodyi (strain ATCC 51908 / MS32)).